A 1151-amino-acid chain; its full sequence is PPi-type phosphoenolpyruvate carboxykinase 1 (1151 aa).

The stretch at Arg-1083–Glu-1129 forms a coiled coil.

This sequence belongs to the PPi-type phosphoenolpyruvate carboxykinase family. Monomer and trimer; forms heterotrimers with PEPCK2 and PEPCK3.

The protein resides in the cytoplasm. It is found in the cytosol. The enzyme catalyses oxaloacetate + diphosphate = phosphoenolpyruvate + phosphate + CO2. Its function is as follows. Inorganic pyrophosphate (PPi)-dependent phosphoenolpyruvate carboxykinase, which regulates the carbon flow of the central metabolism by fixing CO(2) to phosphoenolpyruvate to produce oxaloacetate. Can also produce pyruvate and diphosphate from phosphoenolpyruvate and phosphate. This is PPi-type phosphoenolpyruvate carboxykinase 1 from Entamoeba histolytica (strain ATCC 30459 / HM-1:IMSS / ABRM).